Here is a 166-residue protein sequence, read N- to C-terminus: Thiol peroxidase (166 aa).

The Thioredoxin domain maps to 18–166; sequence LKVGDKAPDV…NYEALLKVLK (149 aa). Cys60 acts as the Cysteine sulfenic acid (-SOH) intermediate in catalysis. An intrachain disulfide couples Cys60 to Cys94.

This sequence belongs to the peroxiredoxin family. Tpx subfamily. As to quaternary structure, homodimer.

It carries out the reaction a hydroperoxide + [thioredoxin]-dithiol = an alcohol + [thioredoxin]-disulfide + H2O. Its function is as follows. Thiol-specific peroxidase that catalyzes the reduction of hydrogen peroxide and organic hydroperoxides to water and alcohols, respectively. Plays a role in cell protection against oxidative stress by detoxifying peroxides. This chain is Thiol peroxidase, found in Helicobacter pylori (strain J99 / ATCC 700824) (Campylobacter pylori J99).